Consider the following 230-residue polypeptide: Large ribosomal subunit protein uL1 (230 aa).

It belongs to the universal ribosomal protein uL1 family. As to quaternary structure, part of the 50S ribosomal subunit.

Its function is as follows. Binds directly to 23S rRNA. The L1 stalk is quite mobile in the ribosome, and is involved in E site tRNA release. Functionally, protein L1 is also a translational repressor protein, it controls the translation of the L11 operon by binding to its mRNA. The chain is Large ribosomal subunit protein uL1 from Lactobacillus gasseri (strain ATCC 33323 / DSM 20243 / BCRC 14619 / CIP 102991 / JCM 1131 / KCTC 3163 / NCIMB 11718 / NCTC 13722 / AM63).